Here is a 319-residue protein sequence, read N- to C-terminus: MMVLKVEELVTGKKSSNGETGEFLPDDFRDGQYEAAVTSEKQEDLKTLPAHHVSLAEQQWEREKQLEAELKKKKLEQRSKLENLEDLEIIIQLKKRKKYRKTKVPVAKEPEPEIITEPVDVPRFLKAALENKLAVVEKFLSDQNNPDVCDEYKRTALHRACLEGHLAIVEKLMEAGAQIEFRDMLESTAIHWACRGGNLEVLKLLLNKGAKISARDKLLSTALHVAVRTGHYECAEHLIACEADLNAKDREGDTPLHDAVRLNRYKMIRLLIMYGADLTIKNSAGKTPMDLVLNWQNGTKAIFDSLKENSYKTSRIATF.

Residues 63–89 are a coiled coil; the sequence is EKQLEAELKKKKLEQRSKLENLEDLEI. ANK repeat units follow at residues 152 to 181, 185 to 214, 218 to 247, 251 to 280, and 284 to 315; these read YKRT…QIEF, LEST…KISA, LLST…DLNA, EGDT…DLTI, and AGKT…KTSR.

Interacts with TTN/titin and YBX1.

Its subcellular location is the nucleus. May play an important role in endothelial cell activation. May act as a nuclear transcription factor that negatively regulates the expression of cardiac genes. This Oryctolagus cuniculus (Rabbit) protein is Ankyrin repeat domain-containing protein 1 (ANKRD1).